A 155-amino-acid polypeptide reads, in one-letter code: Small ribosomal subunit protein uS7c (155 aa).

It belongs to the universal ribosomal protein uS7 family. In terms of assembly, part of the 30S ribosomal subunit.

The protein resides in the plastid. The protein localises to the chloroplast. Its function is as follows. One of the primary rRNA binding proteins, it binds directly to 16S rRNA where it nucleates assembly of the head domain of the 30S subunit. The sequence is that of Small ribosomal subunit protein uS7c (rps7) from Staurastrum punctulatum (Green alga).